The primary structure comprises 377 residues: Probable G-protein coupled receptor F27E5.8 (377 aa).

The Extracellular segment spans residues 1–34 (MSEQDSSSPKYMRFLLGNFTSAEMVTDGNFLIYC). An N-linked (GlcNAc...) asparagine glycan is attached at N18. A helical membrane pass occupies residues 35–55 (IEMGLLVIGVLENIFMIGAVF). Over 56–71 (STSCLHLNLRILICNC) the chain is Cytoplasmic. A helical membrane pass occupies residues 72 to 92 (CLGFILMAVGRAMIAVPLCIA). Residues 93 to 105 (HLRDVDISSHAWC) lie on the Extracellular side of the membrane. Residues 106-126 (FIANAVHHSSADSVCLSFVFI) form a helical membrane-spanning segment. The Cytoplasmic segment spans residues 127–144 (MLERTAGTIWSKDYEKTK). Residues 145–165 (IHIFPCIFAFLQWFIPMFMIL) form a helical membrane-spanning segment. The Extracellular portion of the chain corresponds to 166–195 (GNFLDRANRMEHFLLYPHLPCQIEYLTPTM). The helical transmembrane segment at 196-216 (FMITIFIIVIGFIASVGGITI) threads the bilayer. At 217-251 (VYNKNIKKYNTRDIWFNTVNLSERYQITENIRSTH) the chain is on the cytoplasmic side. The helical transmembrane segment at 252-272 (LLFPLLALMLIFSTLSVSVLI) threads the bilayer. Residues 273–303 (YGGYWVSVMTKEPARFEEVVKWFGRGGEAAQ) are Extracellular-facing. A helical transmembrane segment spans residues 304 to 324 (LFDIITAIYTISFPICAFICH). Residues 325–377 (PNLFRFLRKFIGWNSYAVRPSNLNEIGGFEMSTAPIRTQTEFHFQELSRQWNT) are Cytoplasmic-facing.

It belongs to the G-protein coupled receptor 1 family.

The protein resides in the cell membrane. This chain is Probable G-protein coupled receptor F27E5.8, found in Caenorhabditis elegans.